Here is an 890-residue protein sequence, read N- to C-terminus: DNA mismatch repair protein MutS (890 aa).

Position 607–614 (607–614 (GPNMSGKS)) interacts with ATP.

It belongs to the DNA mismatch repair MutS family.

In terms of biological role, this protein is involved in the repair of mismatches in DNA. It is possible that it carries out the mismatch recognition step. This protein has a weak ATPase activity. This is DNA mismatch repair protein MutS from Bacillus thuringiensis (strain Al Hakam).